Reading from the N-terminus, the 173-residue chain is Large ribosomal RNA subunit accumulation protein YceD (173 aa).

Belongs to the DUF177 domain family.

Plays a role in synthesis, processing and/or stability of 23S rRNA. The chain is Large ribosomal RNA subunit accumulation protein YceD (yceD) from Salmonella typhi.